Reading from the N-terminus, the 395-residue chain is Nitrite extrusion protein (395 aa).

A run of 12 helical transmembrane segments spans residues 15-35 (SLVA…QITL), 44-64 (ISLV…PLGY), 73-93 (LMFM…SIAD), 96-116 (FDLI…SIGV), 133-153 (GIYG…PVIA), 160-180 (STVQ…VLFG), 203-223 (VLWF…AFTI), 240-262 (AGLR…GFLA), 271-291 (LMFV…SPTI), 293-313 (LYTF…GTVF), 330-350 (IVSA…ASVF), and 357-377 (AIGF…VIWM).

It belongs to the major facilitator superfamily. Nitrate/nitrite porter (TC 2.A.1.8) family.

The protein resides in the cell membrane. In terms of biological role, involved in excretion of nitrite produced by the dissimilatory reduction of nitrate. The sequence is that of Nitrite extrusion protein (narK) from Bacillus subtilis (strain 168).